We begin with the raw amino-acid sequence, 275 residues long: Formamidopyrimidine-DNA glycosylase (275 aa).

The Schiff-base intermediate with DNA role is filled by proline 2. The Proton donor role is filled by glutamate 3. Lysine 59 functions as the Proton donor; for beta-elimination activity in the catalytic mechanism. Histidine 94 and arginine 113 together coordinate DNA. The FPG-type zinc-finger motif lies at leucine 241–asparagine 275. The active-site Proton donor; for delta-elimination activity is arginine 265.

It belongs to the FPG family. In terms of assembly, monomer. Zn(2+) is required as a cofactor.

It carries out the reaction Hydrolysis of DNA containing ring-opened 7-methylguanine residues, releasing 2,6-diamino-4-hydroxy-5-(N-methyl)formamidopyrimidine.. The catalysed reaction is 2'-deoxyribonucleotide-(2'-deoxyribose 5'-phosphate)-2'-deoxyribonucleotide-DNA = a 3'-end 2'-deoxyribonucleotide-(2,3-dehydro-2,3-deoxyribose 5'-phosphate)-DNA + a 5'-end 5'-phospho-2'-deoxyribonucleoside-DNA + H(+). Involved in base excision repair of DNA damaged by oxidation or by mutagenic agents. Acts as a DNA glycosylase that recognizes and removes damaged bases. Has a preference for oxidized purines, such as 7,8-dihydro-8-oxoguanine (8-oxoG). Has AP (apurinic/apyrimidinic) lyase activity and introduces nicks in the DNA strand. Cleaves the DNA backbone by beta-delta elimination to generate a single-strand break at the site of the removed base with both 3'- and 5'-phosphates. This Ureaplasma parvum serovar 3 (strain ATCC 700970) protein is Formamidopyrimidine-DNA glycosylase.